The primary structure comprises 159 residues: Ribosome maturation factor RimP (159 aa).

The protein belongs to the RimP family.

The protein resides in the cytoplasm. Functionally, required for maturation of 30S ribosomal subunits. In Streptococcus pneumoniae serotype 19F (strain G54), this protein is Ribosome maturation factor RimP.